The sequence spans 975 residues: MSDHNVNSTFRKTLVELCETATWITSQVYAAKNLEKNDLITVDNKISALYPIAEKYDRSFRTTTVILDEELILKLENAASSLWNSLTIAMKAEKASDKYFNEVFCKCKIFATKLLSIHEALFRTNTNLLRNFKCYISSFKSASEYRFDDLITNTQQHSEKYLQIINENVESFSNEEKTEFKKLTFEFYLVNFQLYLSENDLDTANIYTAKVNITDNSKYMDADLLIELCRMIYNSTVMLKEINNPETQLVDVNIISFLKDVEKYLELPVENLKSHTDYSNLKYSVLIFMANCLVEGHPQASELEQCDHYLSLLQNEYPNKVDPFILAINLTKRRNIVNPAETIEEILMRMIMSVDVISNFQAVIASINDLSKMNTKFSIVCLDYLLINKLNSKNDSKFLGKAICSRFLITTQSKTMNDSEIAESLENFSTQMERIVSEPLTKHAISCIITLLWNTGKKLEKMEKYVVSIRFYKLALKDIISQNYSDRGKIQRALQVVYNKIEDYSNTVRVYQDMDEVDRQSPLCQLLMLQSFLADDKTEEALTCLQKIKSSEDEKSTDALILAVAECKRKTDLSVQGLLMIFDKLQSKSNSQTISSTSSSQTLSILRYTLQMIVKVSEEEPLETFINYLPTVQKLLQKAVEFLKTVKLLNQLPPDVEKEAIYQQSVAVNEIEWFASFSYNVAVKCLVDQSCESISEFPQYCIQFIDLIPVQDFTFPKMYHFTYWRFKATILQLIIAKEKAKQDQHQKDWDIYEKSEELVNSINVMKKSSEFKDGSSLEDRNTLHECFLEALTIHLESALMMPDQTRILDILKKTELYQDSRVDALLIDISSNMEDLPKGVLIEILETVLKRNMGPEVKERELCSWLRILLENAINLNHEVELRILDRVLKILNINQSSLQDTDGVLQTELETIATYCWNIGVNYIIKDNKSNGIVWCKHSMGFANMVNEGLQEQLYSLWESLASSANIDINSIAK.

The protein belongs to the SPO22 family.

Involved in chromosome segregation during sporulation. In Saccharomyces cerevisiae (strain ATCC 204508 / S288c) (Baker's yeast), this protein is Sporulation-specific protein 22 (SPO22).